We begin with the raw amino-acid sequence, 365 residues long: Protein-glutamate methylesterase/protein-glutamine glutaminase 1 (365 aa).

Residues 4 to 121 (KVLVVDDSQF…SRDSVVLKKR (118 aa)) form the Response regulatory domain. Asp-55 is modified (4-aspartylphosphate). The disordered stretch occupies residues 138 to 173 (AARSTTQPSGVRPSALGANLSSSRSPRPASSAPSAP). The span at 158 to 172 (SSSRSPRPASSAPSA) shows a compositional bias: low complexity. The CheB-type methylesterase domain maps to 182 to 365 (KLVAIGASTG…QVWQRLVSDV (184 aa)). Catalysis depends on residues Ser-189, His-216, and Asp-310.

It belongs to the CheB family. In terms of processing, phosphorylated by CheA. Phosphorylation of the N-terminal regulatory domain activates the methylesterase activity.

It is found in the cytoplasm. It carries out the reaction [protein]-L-glutamate 5-O-methyl ester + H2O = L-glutamyl-[protein] + methanol + H(+). It catalyses the reaction L-glutaminyl-[protein] + H2O = L-glutamyl-[protein] + NH4(+). Involved in chemotaxis. Part of a chemotaxis signal transduction system that modulates chemotaxis in response to various stimuli. Catalyzes the demethylation of specific methylglutamate residues introduced into the chemoreceptors (methyl-accepting chemotaxis proteins or MCP) by CheR. Also mediates the irreversible deamidation of specific glutamine residues to glutamic acid. This is Protein-glutamate methylesterase/protein-glutamine glutaminase 1 from Saccharophagus degradans (strain 2-40 / ATCC 43961 / DSM 17024).